A 531-amino-acid polypeptide reads, in one-letter code: Unconventional prefoldin RPB5 interactor (531 aa).

Methionine 1 is subject to N-acetylmethionine. Disordered regions lie at residues 1-24 (MEPP…APLR), 224-381 (ELES…ELPA), 408-470 (KSRS…SGVS), and 500-531 (TIPE…QQRS). Positions 13–24 (PLAEASAAAPLR) are enriched in low complexity. Polar residues-rich tracts occupy residues 257-266 (SPVTDSSAAS) and 280-296 (GQVN…NSYH). Positions 300 to 319 (DDDEEEEDDDDDDDEDDDNE) are enriched in acidic residues. Phosphoserine; by RPS6KB1 is present on serine 369. The span at 414-424 (NSVCSDTSESS) shows a compositional bias: polar residues. Serine 439 is modified (phosphoserine).

Belongs to the RNA polymerase II subunit 5-mediating protein family. As to quaternary structure, homodimer. Component of the PAQosome complex which is responsible for the biogenesis of several protein complexes and which consists of R2TP complex members RUVBL1, RUVBL2, RPAP3 and PIH1D1, URI complex members PFDN2, PFDN6, PDRG1, UXT and URI1 as well as ASDURF, POLR2E and DNAAF10/WDR92. Interacts with POLR2E/RPB5, RUVBL2 and RUVBL1. Interacts with PFDN2, PFDN4 and STAP1; the interactions are phosphorylation-dependent and occur in a growth-dependent manner in the mitochondrion. Interacts with UXT. Interacts with PPP1CC; the interaction is phosphorylation-dependent and occurs in a growth factor-dependent manner. Interacts (via the middle C-terminal region) with GTF2F1 and GTF2F2. Interacts with DMAP1. Interacts with TSC1 and TSC2. Interacts with PRPF8 and EFTUD2 in a ZNHIT2-dependent manner. Phosphorylation occurs in response to androgen treatment in prostate cancer cells in a mTOR-dependent manner. Phosphorylated; hyperhosphorylated in mitochondria in a mTORC-dependent signaling pathway. Phosphorylated at Ser-369 by RPS6KB1 in a growth factor- and rapamycin-dependent manner. S6K1-mediated mitochondrial phosphorylation at Ser-369 disrupts the URI1-PPP1CC complex in the mitochondrion, relieves PPP1CC phosphatase inhibition activity and hence engages a negative feedback diminishing RPS6KB1 kinase activity, preventing sustained S6K1-dependent signaling. Phosphorylated. Phosphorylation occurs essentially on serine residues. In terms of tissue distribution, expressed in the spinal cord, ganglia, choroid plexus and olfactors epithelium of the developing brain. Expressed in skin, lung, kidney, testis and muscles (at protein level). Expressed strongly in brain and kidney. Expressed weakly in skeletal muscle, lung and liver.

Its subcellular location is the nucleus. The protein localises to the cytoplasm. The protein resides in the mitochondrion. It localises to the cell projection. It is found in the dendrite. Its function is as follows. Involved in gene transcription regulation. Acts as a transcriptional repressor in concert with the corepressor UXT to regulate androgen receptor (AR) transcription. May act as a tumor suppressor to repress AR-mediated gene transcription and to inhibit anchorage-independent growth in prostate cancer cells. Required for cell survival in ovarian cancer cells. Together with UXT, associates with chromatin to the NKX3-1 promoter region. Plays a central role in maintaining S6K1 signaling and BAD phosphorylation under normal growth conditions thereby protecting cells from potential deleterious effects of sustained S6K1 signaling. The URI1-PPP1CC complex acts as a central component of a negative feedback mechanism that counteracts excessive S6K1 survival signaling to BAD in response to growth factors. Mediates inhibition of PPP1CC phosphatase activity in mitochondria. Coordinates the regulation of nutrient-sensitive gene expression availability in a mTOR-dependent manner. Seems to be a scaffolding protein able to assemble a prefoldin-like complex that contains PFDs and proteins with roles in transcription and ubiquitination. This Mus musculus (Mouse) protein is Unconventional prefoldin RPB5 interactor (Uri1).